Here is a 218-residue protein sequence, read N- to C-terminus: Hypoxanthine-guanine phosphoribosyltransferase (218 aa).

An N-acetylalanine modification is found at Ala2. Residue Lys69 participates in GMP binding. Lys103 is modified (N6-acetyllysine). Lys115 participates in a covalent cross-link: Glycyl lysine isopeptide (Lys-Gly) (interchain with G-Cter in SUMO1); alternate. A Glycyl lysine isopeptide (Lys-Gly) (interchain with G-Cter in SUMO2); alternate cross-link involves residue Lys115. Residues 134 to 142 (EDIIDTGKT), Lys166, 186 to 188 (KFV), and Asp194 contribute to the GMP site. Asp138 serves as the catalytic Proton acceptor. At Thr142 the chain carries Phosphothreonine. Asp194 contributes to the Mg(2+) binding site.

This sequence belongs to the purine/pyrimidine phosphoribosyltransferase family. Homotetramer. Mg(2+) is required as a cofactor.

The protein resides in the cytoplasm. The catalysed reaction is IMP + diphosphate = hypoxanthine + 5-phospho-alpha-D-ribose 1-diphosphate. It catalyses the reaction GMP + diphosphate = guanine + 5-phospho-alpha-D-ribose 1-diphosphate. It functions in the pathway purine metabolism; IMP biosynthesis via salvage pathway; IMP from hypoxanthine: step 1/1. Converts guanine to guanosine monophosphate, and hypoxanthine to inosine monophosphate. Transfers the 5-phosphoribosyl group from 5-phosphoribosylpyrophosphate onto the purine. Plays a central role in the generation of purine nucleotides through the purine salvage pathway. This chain is Hypoxanthine-guanine phosphoribosyltransferase (HPRT1), found in Canis lupus familiaris (Dog).